A 392-amino-acid polypeptide reads, in one-letter code: S-adenosylmethionine decarboxylase proenzyme (392 aa).

Residues E43 and E46 contribute to the active site. The active-site Schiff-base intermediate with substrate; via pyruvic acid is the S100. Residue S100 is modified to Pyruvic acid (Ser); by autocatalysis. The Proton donor; for catalytic activity role is filled by C114. Active-site proton acceptor; for processing activity residues include S264 and H277.

This sequence belongs to the eukaryotic AdoMetDC family. Pyruvate is required as a cofactor. Post-translationally, is synthesized initially as an inactive proenzyme. Formation of the active enzyme involves a self-maturation process in which the active site pyruvoyl group is generated from an internal serine residue via an autocatalytic post-translational modification. Two non-identical subunits are generated from the proenzyme in this reaction, and the pyruvate is formed at the N-terminus of the alpha chain, which is derived from the carboxyl end of the proenzyme. The post-translation cleavage follows an unusual pathway, termed non-hydrolytic serinolysis, in which the side chain hydroxyl group of the serine supplies its oxygen atom to form the C-terminus of the beta chain, while the remainder of the serine residue undergoes an oxidative deamination to produce ammonia and the pyruvoyl group blocking the N-terminus of the alpha chain.

It catalyses the reaction S-adenosyl-L-methionine + H(+) = S-adenosyl 3-(methylsulfanyl)propylamine + CO2. It functions in the pathway amine and polyamine biosynthesis; S-adenosylmethioninamine biosynthesis; S-adenosylmethioninamine from S-adenosyl-L-methionine: step 1/1. The sequence is that of S-adenosylmethionine decarboxylase proenzyme from Leishmania infantum.